Consider the following 2603-residue polypeptide: Ankyrin repeat domain-containing protein 17 (2603 aa).

The residue at position 1 (Met-1) is an N-acetylmethionine. Over residues 1-32 the composition is skewed to low complexity; the sequence is MEKATVPAAAEGEGSPPAAAAVAAPPAAAAAE. The segment at 1 to 127 is disordered; sequence MEKATVPAAA…DDDEEEEVSE (127 aa). Residues Ser-15 and Ser-42 each carry the phosphoserine modification. Positions 68–77 are enriched in basic residues; the sequence is PHHKAKRNRT. The span at 82 to 92 shows a compositional bias: low complexity; it reads SSSESSSDSDN. Over residues 93 to 107 the composition is skewed to gly residues; it reads SGGGGGGGGGGGGGT. Over residues 112–127 the composition is skewed to acidic residues; sequence SEEEEDDDDEEEEVSE. At Ser-152 the chain carries Phosphoserine. ANK repeat units lie at residues 229-258, 262-291, 296-325, 329-358, 362-391, 396-425, 429-458, 462-491, 495-524, 529-558, 559-588, 592-621, 625-654, 659-688, and 692-721; these read SDNR…SVNE, EGES…NVED, GDIT…DVNA, TGNT…SIED, NGHT…GINT, FKES…DQEH, EMHT…QVNM, SFES…SLEE, EGYT…NINA, TQET…DIEL, GCST…NVHA, TGDT…DLEH, GGRT…NVNR, NDHT…DPTH, and DGST…NLLA. Residue Lys-314 forms a Glycyl lysine isopeptide (Lys-Gly) (interchain with G-Cter in SUMO2) linkage. A disordered region spans residues 770 to 792; it reads VRSKAASKQKSNSHLPANSQDVQ. The segment covering 775 to 792 has biased composition (polar residues); it reads ASKQKSNSHLPANSQDVQ. Position 799 is a phosphoserine (Ser-799). 10 ANK repeats span residues 1078-1107, 1111-1140, 1145-1174, 1178-1207, 1213-1242, 1247-1276, 1280-1309, 1315-1344, 1348-1377, and 1381-1410; these read NHDT…SIEH, KGFT…DIEA, TKDT…NKEH, SDYT…EINS, LGIS…DINA, NRNT…NVEH, TGLT…DVNA, SRDT…HIDV, KGNT…DVDA, and RKIT…QFPS. A coiled-coil region spans residues 1438–1522; it reads VQAKDRQAAE…EKEKLKVEEE (85 aa). Ser-1453 is subject to Phosphoserine. Disordered stretches follow at residues 1475–1496 and 1513–1713; these read AKRE…RKLE and EKEK…PKRE. Over residues 1477–1487 the composition is skewed to basic residues; that stretch reads REKRKEKRRKK. Composition is skewed to low complexity over residues 1526–1546, 1598–1607, and 1616–1636; these read LTEP…TWTT, ESKSSSTSES, and SSCS…NHAS. Ser-1631 is subject to Phosphoserine. Composition is skewed to polar residues over residues 1638-1648 and 1671-1699; these read VVTTTMASKKQ and LSET…SPNG. Phosphoserine is present on residues Ser-1692, Ser-1696, and Ser-1705. One can recognise a KH domain in the interval 1721 to 1785; sequence RRSKKVSVPS…ESTRQATQLI (65 aa). Arg-1870 is subject to Asymmetric dimethylarginine. Disordered stretches follow at residues 1902–1991, 2007–2195, and 2269–2327; these read PRLP…PSVR, TTVT…SSSA, and VSSQ…YGSV. 2 stretches are compositionally biased toward low complexity: residues 1946–1989 and 2007–2024; these read SNQN…SSPS and TTVT…TNAT. Ser-2038, Ser-2040, Ser-2041, Ser-2043, Ser-2055, and Ser-2063 each carry phosphoserine. 3 stretches are compositionally biased toward low complexity: residues 2068–2077, 2087–2108, and 2175–2189; these read ASASEQEASS, RPPH…QQPP, and PPSH…TPAP. Residues 2269–2298 show a composition bias toward polar residues; sequence VSSQSTPESMLSGKSSYLPNSDPLHQSDTS. Residues 2303–2313 show a composition bias toward pro residues; the sequence is FRPPLQRPAPS. At Ser-2373 the chain carries Phosphoserine. Positions 2378–2447 are disordered; it reads LTPCSSASNE…TGTSAPSVIG (70 aa). Over residues 2379–2391 the composition is skewed to polar residues; that stretch reads TPCSSASNESPAQ. Residues 2392 to 2411 are compositionally biased toward low complexity; sequence SVSSGVRAPSPAPSSVPLGS. A Phosphoserine modification is found at Ser-2401. A compositionally biased stretch (polar residues) spans 2435–2447; that stretch reads IRQTGTSAPSVIG.

As to quaternary structure, interacts (via N-terminus) with NOD2. Interacts with CDK2, MCM3, MCM5, MCM7, CDC6 and PCNA. Interacts with MAVS and IFIH1. Interacts (via the second ankyrin repeat cluster) with RIGI. In terms of processing, phosphorylated by CDK2. In terms of tissue distribution, highly expressed in fetal liver. Detected in adult liver cells, ovarian oocytes, seminiferous tubules of the testes and pelvic region of the kidney. It was not detected in heart, gut, lung, spleen and skeletal muscle. Earliest specific in situ marker of hepatic differentiation during embryogenesis, useful for characterization of inductive events involved in hepatic specification.

The protein resides in the cytoplasm. It localises to the nucleus. Could play pivotal roles in cell cycle and DNA regulation. Involved in innate immune defense against viruse by positively regulating the viral dsRNA receptors RIGI and IFIH1 signaling pathways. Involves in NOD2- and NOD1-mediated responses to bacteria suggesting a role in innate antibacterial immune pathways too. Could play a central role for the formation and/or maintenance of the blood vessels of the circulation system. This is Ankyrin repeat domain-containing protein 17 (Ankrd17) from Mus musculus (Mouse).